Reading from the N-terminus, the 95-residue chain is Co-chaperonin GroES (95 aa).

This sequence belongs to the GroES chaperonin family. As to quaternary structure, heptamer of 7 subunits arranged in a ring. Interacts with the chaperonin GroEL.

The protein resides in the cytoplasm. Together with the chaperonin GroEL, plays an essential role in assisting protein folding. The GroEL-GroES system forms a nano-cage that allows encapsulation of the non-native substrate proteins and provides a physical environment optimized to promote and accelerate protein folding. GroES binds to the apical surface of the GroEL ring, thereby capping the opening of the GroEL channel. In Francisella tularensis subsp. tularensis (strain FSC 198), this protein is Co-chaperonin GroES.